The sequence spans 285 residues: Cyclin-Y-like protein 1B (285 aa).

In terms of domain architecture, Cyclin N-terminal spans 111-209; the sequence is PKRNCIFRHF…CFLELLEFNI (99 aa).

The protein belongs to the cyclin family. Cyclin Y subfamily.

This is Cyclin-Y-like protein 1B from Homo sapiens (Human).